A 309-amino-acid polypeptide reads, in one-letter code: Putative taste receptor type 2 member 36 (309 aa).

Position 1 (Met1) is a topological domain, extracellular. Residues 2–22 (ICFLLIILSILVVFAFVLGNF) form a helical membrane-spanning segment. Residues 23 to 46 (SNGFIALVNVIDWVKRQKISSADQ) lie on the Cytoplasmic side of the membrane. The helical transmembrane segment at 47-67 (ILTALVVSRVGLLWVILLHWY) threads the bilayer. Residues 68-79 (SNVLNSALYSSE) are Extracellular-facing. A helical transmembrane segment spans residues 80 to 100 (VIIFISNAWAIINHFSIWLAT). At 101 to 126 (SLSIFYLLKIVNFSRLIFHHLKRKAK) the chain is on the cytoplasmic side. Residues 127–147 (SVVLVIVLGPLVFLVCHLVMK) form a helical membrane-spanning segment. Residues 148 to 181 (HTYINVWTKEYEGNVTWKIKLRNAIHLSNLTVST) are Extracellular-facing. Residues Asn161 and Asn176 are each glycosylated (N-linked (GlcNAc...) asparagine). Residues 182 to 202 (LANLIPFTLTLISFLLLIYSL) traverse the membrane as a helical segment. At 203 to 229 (CKHLKKMQLHGKGSQDPSTKVHIKALQ) the chain is on the cytoplasmic side. A helical transmembrane segment spans residues 230–250 (TVTSFLLLCAIYFLSMIISVC). Topologically, residues 251-259 (NFGRLEKQP) are extracellular. A helical transmembrane segment spans residues 260–280 (VFMFCQAIIFSYPSTHPFILI). At 281-309 (LGNKKLKQIFLSVFWQMRYWVKGEKPSSP) the chain is on the cytoplasmic side.

It belongs to the G-protein coupled receptor T2R family.

It localises to the membrane. Its function is as follows. Putative taste receptor which may play a role in the perception of bitterness. In Homo sapiens (Human), this protein is Putative taste receptor type 2 member 36.